A 730-amino-acid chain; its full sequence is Transcription factor verF (730 aa).

The C2H2-type 1 zinc-finger motif lies at 19–41 (YECSLCLKRYKRREHLFRHIGSH). Residues 47 to 69 (YQCNSCDGAFQRADVLKRHLRTC) form a C2H2-type 2; atypical zinc finger. Residues 83–109 (CDRCVRQKKACSSHQPCHSCAKKGAQC) constitute a DNA-binding region (zn(2)-C6 fungal-type). Residues 120–129 (RLSQHSSTNH) are compositionally biased toward polar residues. Positions 120 to 151 (RLSQHSSTNHTPKDQELSTQFTNPPPPPSTST) are disordered.

It localises to the nucleus. Transcription factor; part of the gene cluster that mediates the biosynthesis of the neurotoxin verrucosidin, a methylated alpha-pyrone polyketide that inhibits oxidative phosphorylation in mitochondria and thereby causes neurological diseases. This is Transcription factor verF from Penicillium polonicum.